Here is a 239-residue protein sequence, read N- to C-terminus: Peptidyl-tRNA hydrolase (239 aa).

Tyr-14 lines the tRNA pocket. His-19 (proton acceptor) is an active-site residue. Residues Phe-64, Asn-66, and Asn-112 each contribute to the tRNA site.

It belongs to the PTH family. In terms of assembly, monomer.

Its subcellular location is the cytoplasm. The catalysed reaction is an N-acyl-L-alpha-aminoacyl-tRNA + H2O = an N-acyl-L-amino acid + a tRNA + H(+). In terms of biological role, hydrolyzes ribosome-free peptidyl-tRNAs (with 1 or more amino acids incorporated), which drop off the ribosome during protein synthesis, or as a result of ribosome stalling. Catalyzes the release of premature peptidyl moieties from peptidyl-tRNA molecules trapped in stalled 50S ribosomal subunits, and thus maintains levels of free tRNAs and 50S ribosomes. The protein is Peptidyl-tRNA hydrolase of Rhizobium meliloti (strain 1021) (Ensifer meliloti).